Reading from the N-terminus, the 352-residue chain is MLTERQELILKTIIMDFTQSHEPVGSKTVMNQLPVKVSSATVRNEMAALEEKGLLEKTHSSSGRIPSTAGYRYYLDHLINPVKIPASVYNRIIYQLDQPFQQVNEIVQEAAKILSDLTNYTAFAAGPETRSVKVTGFRIVPLSSHQVMAILVTDDGNVKNQIYTLPHHTNGEEIEKAVRLINDQLVGKPLSSVNEVLLKRIADHLVAGGSAPEILDLLQDVIKDAASEQMYVDGQINLLSNYESDDLAKVKSLYKLIDQNDAISSLIGFNPKDEIKNDSKSKVQVKLGSELQSDLLEDYSLLTAQYSVGKYGKGTIALLGPTNMPYSQMIGLLEYFRNELAKKLLDYYGRFK.

This sequence belongs to the HrcA family.

In terms of biological role, negative regulator of class I heat shock genes (grpE-dnaK-dnaJ and groELS operons). Prevents heat-shock induction of these operons. This Lactobacillus gasseri (strain ATCC 33323 / DSM 20243 / BCRC 14619 / CIP 102991 / JCM 1131 / KCTC 3163 / NCIMB 11718 / NCTC 13722 / AM63) protein is Heat-inducible transcription repressor HrcA.